The primary structure comprises 610 residues: MKWVVSFFLLFLLNFSDSRTMHKNAYGIDSILDSSPCSSGTNLVGLATIFFAQSVQGATYEEVSQMVKDVLTIIEKPTGSKQPAGCLENQVSAFLEEICREKEIPEKYGLSDCCSRTGEERHDCFLAHKKAAPASIPPFPVLEPVTSCKSYKENRELFINRYIYEIARRHPVLYAPTILSVANQYNKIIPHCCKAENATECFETKVTSITKELRESSLLNQHICAVMGKFGPRTFRAITVTKVSQKFPKANFTEIQKLVMDVAHIHEECCKGNVLECLQDGERVMSYICSQQDILSRQIAECCKLPTTLELGHCIIHAENDDKPEGLSPNVNRFLGDRDFNQLSSRDKDLSMARFTYEYSRRHTKLAVPIILRVAKGYQELLEKCSQSENPSECQDKGEEELEKYIQESQALAKRSCGLFQKLGEYYLQNAFLVAYTKKAPQLTSPELMALTRKMANAGAICCHLSEDKQLACGEGVADLIIGHLCIRHEENPINPGVDQCCTSSYSNRRPCFSSLVVDETYVPPPFSDDKFIFHKDLCQVQGVPLQTMKQQFLINLVKQKPQITEEQLETVVADFSGLLEKCCQSQEQEVCFTEEGPALISKTRAALGV.

An N-terminal signal peptide occupies residues 1-18; sequence MKWVVSFFLLFLLNFSDS. 3 Albumin domains span residues 19–210, 211–403, and 404–602; these read RTMH…TSIT, KELR…EELE, and KYIQ…ALIS. Position 22 (His22) interacts with Cu(2+). 8 disulfides stabilise this stretch: Cys99–Cys114, Cys113–Cys124, Cys148–Cys193, Cys192–Cys201, Cys224–Cys270, Cys269–Cys277, Cys289–Cys303, and Cys302–Cys314. Phosphoserine occurs at positions 111 and 115. Asn197 and Asn251 each carry an N-linked (GlcNAc...) asparagine glycan. A Phosphoserine modification is found at Ser345. Disulfide bonds link Cys385/Cys394, Cys417/Cys463, Cys462/Cys473, Cys486/Cys502, Cys501/Cys512, Cys539/Cys584, and Cys583/Cys592. The residue at position 445 (Ser445) is a Phosphoserine.

Belongs to the ALB/AFP/VDB family. As to quaternary structure, dimeric and trimeric forms have been found in addition to the monomeric form. Post-translationally, sulfated. As to expression, plasma.

It is found in the secreted. Its function is as follows. Binds copper, nickel, and fatty acids as well as, and bilirubin less well than, serum albumin. The protein is Alpha-fetoprotein (AFP) of Bos taurus (Bovine).